The sequence spans 203 residues: A-type ATP synthase subunit E (203 aa).

The protein belongs to the V-ATPase E subunit family. As to quaternary structure, has multiple subunits with at least A(3), B(3), C, D, E, F, H, I and proteolipid K(x).

The protein localises to the cell membrane. Its function is as follows. Component of the A-type ATP synthase that produces ATP from ADP in the presence of a proton gradient across the membrane. This is A-type ATP synthase subunit E from Thermococcus sibiricus (strain DSM 12597 / MM 739).